The chain runs to 354 residues: Replication factor C subunit 3 (354 aa).

41 to 48 (GPSGSGKK) serves as a coordination point for ATP.

The protein belongs to the activator 1 small subunits family. Heterotetramer of subunits RFC2, RFC3, RFC4 and RFC5 that can form a complex with RFC1.

The protein resides in the nucleus. Its function is as follows. May be involved in DNA replication and thus regulate cell proliferation. This chain is Replication factor C subunit 3 (RFC3), found in Arabidopsis thaliana (Mouse-ear cress).